Reading from the N-terminus, the 204-residue chain is Refilin-A (204 aa).

Residues 1–52 are disordered; it reads MVGHLHLQAMGDTREQSRDGLLDSPDSGLPPSPSPSPPFYALSPGTLDTRTT. The segment covering 12-21 has biased composition (basic and acidic residues); sequence DTREQSRDGL. Pro residues predominate over residues 28–38; sequence GLPPSPSPSPP. R151 is modified (asymmetric dimethylarginine).

It belongs to the Refilin family. Interacts with FLNA and FLNB. In terms of tissue distribution, detected in various tissues, with highest expression in lung, followed by spleen.

The protein resides in the cytoplasm. It localises to the cytoskeleton. Involved in the regulation of the perinuclear actin network and nuclear shape through interaction with filamins. Plays an essential role in the formation of cartilaginous skeletal elements. The polypeptide is Refilin-A (Rflna) (Mus musculus (Mouse)).